The sequence spans 452 residues: Protein FAM81B (452 aa).

2 stretches are compositionally biased toward polar residues: residues 1 to 11 and 38 to 55; these read MQLQFLGTLAS and IMSS…TATA. The interval 1–85 is disordered; that stretch reads MQLQFLGTLA…KVRLSPAKMS (85 aa). 2 coiled-coil regions span residues 164-192 and 329-452; these read IQTI…DQAA and LGHI…LQEV.

This sequence belongs to the FAM81 family.

The chain is Protein FAM81B (FAM81B) from Homo sapiens (Human).